The following is a 182-amino-acid chain: Vacuolar protein sorting-associated protein 29 (182 aa).

Lysine 50 carries the N6-acetyllysine modification.

Belongs to the VPS29 family. As to quaternary structure, component of the commander complex consisting of the CCC subcomplex and the retriever subcomplex. Component of the heterotrimeric retriever complex formed by VPS26C, VPS29 and VPS35L; within the complex interacts with VPS35L. Component of the heterotrimeric retromer cargo-selective complex (CSC), also described as vacuolar protein sorting subcomplex (VPS), formed by VPS26 (VPS26A or VPS26B), VPS29 and VPS35. The CSC has a highly elongated structure with VPS26 and VPS29 binding independently at opposite distal ends of VPS35 as central platform. The CSC is believed to associate with variable sorting nexins to form functionally distinct retromer complex variants. The originally described retromer complex (also called SNX-BAR retromer) is a pentamer containing the CSC and a heterodimeric membrane-deforming subcomplex formed between SNX1 or SNX2 and SNX5 or SNX6 (also called SNX-BAR subcomplex); the respective CSC and SNX-BAR subcomplexes associate with low affinity. The CSC associates with SNX3 to form a SNX3-retromer complex. The CSC associates with SNX27, the WASH complex and the SNX-BAR subcomplex to form the SNX27-retromer complex. Interacts with VPS26A, VPS35, SNX1, SNX2, SNX3, SNX27, WASHC5. Interacts with TBC1D5; this interaction is blocked by VPS35L in the retriever complex. Interacts with SNX17; the interaction is indirect; SNX17 (via its C-terminus) interacts with the retriever complex (via VPS26C and VPS35L). Interacts with VPS26B and ANKRD27.

Its subcellular location is the cytoplasm. The protein localises to the membrane. The protein resides in the endosome membrane. It is found in the early endosome. It localises to the late endosome. Its function is as follows. Component of the commander complex that is essential for endosomal recycling of transmembrane cargos; the commander complex is composed of the CCC subcomplex and the retriever subcomplex. Component of the retriever complex, which is a heterotrimeric complex related to retromer cargo-selective complex (CSC) and essential for retromer-independent retrieval and recycling of numerous cargos such as integrin alpha-5/beta-1 (ITGA5:ITGB1). Component of the retromer cargo-selective complex (CSC). The CSC is believed to be the core functional component of retromer or respective retromer complex variants acting to prevent missorting of selected transmembrane cargo proteins into the lysosomal degradation pathway. The recruitment of the CSC to the endosomal membrane involves RAB7A and SNX3. The SNX-BAR retromer mediates retrograde transport of cargo proteins from endosomes to the trans-Golgi network (TGN) and is involved in endosome-to-plasma membrane transport for cargo protein recycling. The SNX3-retromer mediates the retrograde endosome-to-TGN transport of WLS distinct from the SNX-BAR retromer pathway. The SNX27-retromer is believed to be involved in endosome-to-plasma membrane trafficking and recycling of a broad spectrum of cargo proteins. The CSC seems to act as recruitment hub for other proteins, such as the WASH complex and TBC1D5. Required to regulate transcytosis of the polymeric immunoglobulin receptor (pIgR-pIgA). In the endosomes, retriever complex drives the retrieval and recycling of NxxY-motif-containing cargo proteins by coupling to SNX17, a cargo essential for the homeostatic maintenance of numerous cell surface proteins associated with processes that include cell migration, cell adhesion, nutrient supply and cell signaling. The recruitment of the retriever complex to the endosomal membrane involves CCC and WASH complexes. Involved in GLUT1 endosome-to-plasma membrane trafficking; the function is dependent of association with ANKRD27. The polypeptide is Vacuolar protein sorting-associated protein 29 (Rattus norvegicus (Rat)).